Here is a 415-residue protein sequence, read N- to C-terminus: Fructose-like permease IIC component (415 aa).

Residues Met-1–Met-46 lie on the Cytoplasmic side of the membrane. The 381-residue stretch at Leu-35–Leu-415 folds into the PTS EIIC type-2 domain. The chain crosses the membrane as a helical span at residues Val-47–Trp-67. Residues Leu-68–Ser-101 are Periplasmic-facing. A helical transmembrane segment spans residues Phe-102 to Ile-122. Topologically, residues Gly-123 to Leu-126 are cytoplasmic. A helical membrane pass occupies residues Ala-127 to Phe-147. At Asp-148–Ser-157 the chain is on the periplasmic side. A helical membrane pass occupies residues Ser-158–Val-178. The Cytoplasmic portion of the chain corresponds to Lys-179–Thr-197. Residues Phe-198 to Pro-218 traverse the membrane as a helical segment. The Periplasmic segment spans residues Phe-219–Lys-237. A helical membrane pass occupies residues Gly-238 to Ile-258. The Cytoplasmic portion of the chain corresponds to Asn-259–Pro-276. A helical transmembrane segment spans residues Val-277–Ile-297. At Asp-298–Ala-318 the chain is on the periplasmic side. The helical transmembrane segment at Met-319–Ile-339 threads the bilayer. The Cytoplasmic portion of the chain corresponds to Thr-340–Ala-341. Residues Ile-342 to Val-362 traverse the membrane as a helical segment. At Gln-363 to Asn-378 the chain is on the periplasmic side. A helical transmembrane segment spans residues Leu-379–Phe-399. The Cytoplasmic segment spans residues Leu-400–Leu-415.

It localises to the cell inner membrane. Functionally, the phosphoenolpyruvate-dependent sugar phosphotransferase system (PTS), a major carbohydrate active -transport system, catalyzes the phosphorylation of incoming sugar substrates concomitant with their translocation across the cell membrane. In Escherichia coli O6:H1 (strain CFT073 / ATCC 700928 / UPEC), this protein is Fructose-like permease IIC component (fryC).